The primary structure comprises 468 residues: MRVVTRFAPSPTGSLHLGGARTALFNWLFARHHKGKFLLRMEDTDKKRSSDVVVQSIIDDMSWLGLQHDGDIVVQSSRAARHVAVARELVELGRAYRCYCSEDEVNEQKLQSEGTGKYFRHVCPWKHLNSTGDLPNKPYVVRLKSPENTTIEFLDGVYGKISVKSDQIDDMVILRSDGTPTYLLAVVVDDHDMEITHIIRGSDHITNTVKQIVLAEAMSWVSPKFFHIPLIHDENGAKLSKRNRAPGIHEYKEQGFLPEALCNYLLRMGWSYQNKEIVSMQEAIALFSMEDVGVSCSCLDYKKLVFLNHHYMGSKSESEILDLLLPILEEKLGGRISEEKLSRLSLGIKQLVERAKTLTDLAEDSLFYVQDVEININPEAVETIQNSKKFLAELLESMSGIHPDMWKKTHLSSQIKEFSKTRNLAMSDVYHFLRASITGRLQSPNISEVMEILGQEMCINRMLSAQEI.

The 'HIGH' region signature appears at proline 9 to glycine 19. The 'KMSKS' region motif lies at lysine 238–arginine 242. Residue lysine 241 coordinates ATP.

It belongs to the class-I aminoacyl-tRNA synthetase family. Glutamate--tRNA ligase type 1 subfamily. In terms of assembly, monomer.

Its subcellular location is the cytoplasm. It catalyses the reaction tRNA(Glu) + L-glutamate + ATP = L-glutamyl-tRNA(Glu) + AMP + diphosphate. Its function is as follows. Catalyzes the attachment of glutamate to tRNA(Glu) in a two-step reaction: glutamate is first activated by ATP to form Glu-AMP and then transferred to the acceptor end of tRNA(Glu). This chain is Glutamate--tRNA ligase 2, found in Anaplasma phagocytophilum (strain HZ).